A 348-amino-acid chain; its full sequence is Large ribosomal subunit protein uL3m (348 aa).

The transit peptide at 1–40 (MPGWRLLAWAGARVLDRGTGGLGTALGSGNRTDICVLVRS) directs the protein to the mitochondrion.

The protein belongs to the universal ribosomal protein uL3 family. In terms of assembly, component of the mitochondrial ribosome large subunit (39S) which comprises a 16S rRNA and about 50 distinct proteins.

Its subcellular location is the mitochondrion. The sequence is that of Large ribosomal subunit protein uL3m (MRPL3) from Bos taurus (Bovine).